A 249-amino-acid polypeptide reads, in one-letter code: Precorrin-4 C(11)-methyltransferase (249 aa).

The protein belongs to the precorrin methyltransferase family.

The catalysed reaction is precorrin-4 + S-adenosyl-L-methionine = precorrin-5 + S-adenosyl-L-homocysteine. It participates in cofactor biosynthesis; adenosylcobalamin biosynthesis; cob(II)yrinate a,c-diamide from precorrin-2 (aerobic route): step 4/10. Catalyzes the methylation of C-11 in precorrin-4 to form precorrin-5. This Rhodococcus erythropolis (Arthrobacter picolinophilus) protein is Precorrin-4 C(11)-methyltransferase (cobM).